Consider the following 102-residue polypeptide: Small ribosomal subunit protein uS10 (102 aa).

The protein belongs to the universal ribosomal protein uS10 family. In terms of assembly, part of the 30S ribosomal subunit.

In terms of biological role, involved in the binding of tRNA to the ribosomes. This Gluconobacter oxydans (strain 621H) (Gluconobacter suboxydans) protein is Small ribosomal subunit protein uS10.